The sequence spans 258 residues: Sugar fermentation stimulation protein homolog (258 aa).

Belongs to the SfsA family.

The chain is Sugar fermentation stimulation protein homolog from Marinomonas sp. (strain MWYL1).